The chain runs to 438 residues: Adenylosuccinate synthetase (438 aa).

Residues 13 to 19 (GDEGKGK) and 41 to 43 (GHT) contribute to the GTP site. Aspartate 14 acts as the Proton acceptor in catalysis. Positions 14 and 41 each coordinate Mg(2+). IMP is bound by residues 14-17 (DEGK), 39-42 (NAGH), threonine 136, arginine 150, glutamine 231, threonine 246, and arginine 310. Residue histidine 42 is the Proton donor of the active site. 306-312 (STTGRRR) is a binding site for substrate. GTP contacts are provided by residues arginine 312, 338 to 340 (KID), and 421 to 423 (STG).

Belongs to the adenylosuccinate synthetase family. Homodimer. Mg(2+) is required as a cofactor.

The protein resides in the cytoplasm. The catalysed reaction is IMP + L-aspartate + GTP = N(6)-(1,2-dicarboxyethyl)-AMP + GDP + phosphate + 2 H(+). It functions in the pathway purine metabolism; AMP biosynthesis via de novo pathway; AMP from IMP: step 1/2. Plays an important role in the de novo pathway of purine nucleotide biosynthesis. Catalyzes the first committed step in the biosynthesis of AMP from IMP. The protein is Adenylosuccinate synthetase of Blochmanniella floridana.